A 176-amino-acid chain; its full sequence is NAD(P)H-quinone oxidoreductase subunit 6, chloroplastic (176 aa).

5 helical membrane passes run 10 to 30 (ILLV…VLFT), 32 to 52 (PIFS…FHIL), 61 to 81 (AQLL…VMFM), 92 to 112 (LWTV…FSLI), and 152 to 172 (FYLP…GAIA).

This sequence belongs to the complex I subunit 6 family. In terms of assembly, NDH is composed of at least 16 different subunits, 5 of which are encoded in the nucleus.

The protein localises to the plastid. It is found in the chloroplast thylakoid membrane. The enzyme catalyses a plastoquinone + NADH + (n+1) H(+)(in) = a plastoquinol + NAD(+) + n H(+)(out). It catalyses the reaction a plastoquinone + NADPH + (n+1) H(+)(in) = a plastoquinol + NADP(+) + n H(+)(out). Its function is as follows. NDH shuttles electrons from NAD(P)H:plastoquinone, via FMN and iron-sulfur (Fe-S) centers, to quinones in the photosynthetic chain and possibly in a chloroplast respiratory chain. The immediate electron acceptor for the enzyme in this species is believed to be plastoquinone. Couples the redox reaction to proton translocation, and thus conserves the redox energy in a proton gradient. The chain is NAD(P)H-quinone oxidoreductase subunit 6, chloroplastic (ndhG) from Drimys granadensis.